A 132-amino-acid chain; its full sequence is Fatty acid-binding protein, adipocyte (132 aa).

Cys2 is modified (N-acetylcysteine). The residue at position 13 (Ser13) is a Phosphoserine. Position 20 is a phosphotyrosine; by Tyr-kinases (Tyr20). The Nuclear localization signal motif lies at 22–32 (KEVGVGFATRK). A fatty acid is bound at residue 127 to 129 (RVY).

It belongs to the calycin superfamily. Fatty-acid binding protein (FABP) family. As to quaternary structure, monomer. Homodimer. Interacts with PPARG.

The protein resides in the cytoplasm. It is found in the nucleus. Functionally, lipid transport protein in adipocytes. Binds both long chain fatty acids and retinoic acid. Delivers long-chain fatty acids and retinoic acid to their cognate receptors in the nucleus. The polypeptide is Fatty acid-binding protein, adipocyte (Fabp4) (Mus musculus (Mouse)).